The chain runs to 177 residues: Large ribosomal subunit protein uL6 (177 aa).

The protein belongs to the universal ribosomal protein uL6 family. As to quaternary structure, part of the 50S ribosomal subunit.

This protein binds to the 23S rRNA, and is important in its secondary structure. It is located near the subunit interface in the base of the L7/L12 stalk, and near the tRNA binding site of the peptidyltransferase center. This is Large ribosomal subunit protein uL6 from Rhizobium johnstonii (strain DSM 114642 / LMG 32736 / 3841) (Rhizobium leguminosarum bv. viciae).